The following is a 168-amino-acid chain: ATP synthase F(1) complex subunit delta, mitochondrial (168 aa).

A mitochondrion-targeting transit peptide spans 1 to 22; sequence MLPAALLRRPGLGRLVRHARAY. Residues Lys136 and Lys165 each carry the N6-acetyllysine; alternate modification. Residues Lys136 and Lys165 each carry the N6-succinyllysine; alternate modification.

Belongs to the ATPase epsilon chain family. In terms of assembly, component of the ATP synthase complex composed at least of ATP5F1A/subunit alpha, ATP5F1B/subunit beta, ATP5MC1/subunit c (homooctomer), MT-ATP6/subunit a, MT-ATP8/subunit 8, ATP5ME/subunit e, ATP5MF/subunit f, ATP5MG/subunit g, ATP5MK/subunit k, ATP5MJ/subunit j, ATP5F1C/subunit gamma, ATP5F1D/subunit delta, ATP5F1E/subunit epsilon, ATP5PF/subunit F6, ATP5PB/subunit b, ATP5PD/subunit d, ATP5PO/subunit OSCP. ATP synthase complex consists of a soluble F(1) head domain (subunits alpha(3) and beta(3)) - the catalytic core - and a membrane F(0) domain - the membrane proton channel (subunits c, a, 8, e, f, g, k and j). These two domains are linked by a central stalk (subunits gamma, delta, and epsilon) rotating inside the F1 region and a stationary peripheral stalk (subunits F6, b, d, and OSCP). Component of a complex composed at least by ATPIF1, ATP5F1A, ATP5F1B, ATP5F1C AND ATP5F1E.

The protein localises to the mitochondrion. Its subcellular location is the mitochondrion inner membrane. Functionally, subunit delta, of the mitochondrial membrane ATP synthase complex (F(1)F(0) ATP synthase or Complex V) that produces ATP from ADP in the presence of a proton gradient across the membrane which is generated by electron transport complexes of the respiratory chain. ATP synthase complex consist of a soluble F(1) head domain - the catalytic core - and a membrane F(1) domain - the membrane proton channel. These two domains are linked by a central stalk rotating inside the F(1) region and a stationary peripheral stalk. During catalysis, ATP synthesis in the catalytic domain of F(1) is coupled via a rotary mechanism of the central stalk subunits to proton translocation. In vivo, can only synthesize ATP although its ATP hydrolase activity can be activated artificially in vitro. With the central stalk subunit gamma, is essential for the biogenesis of F(1) catalytic part of the ATP synthase complex namely in the formation of F1 assembly intermediate. This chain is ATP synthase F(1) complex subunit delta, mitochondrial, found in Homo sapiens (Human).